The primary structure comprises 210 residues: uncharacterized protein (210 aa).

The CS domain maps to 2 to 91 (SRHPEVKWAQ…AEAKWWKKLV (90 aa)). The interval 165 to 210 (GMGGMGGMDEFEDESDDEEEVSKPQDAEKAAEAGKSQESDAKTETS) is disordered. Positions 173–184 (DEFEDESDDEEE) are enriched in acidic residues. Over residues 185–210 (VSKPQDAEKAAEAGKSQESDAKTETS) the composition is skewed to basic and acidic residues.

This is an uncharacterized protein from Oryza sativa subsp. indica (Rice).